Reading from the N-terminus, the 117-residue chain is Huntingtin-interacting protein M (117 aa).

Basic and acidic residues-rich tracts occupy residues Met-1–Cys-11 and Gln-83–Arg-97. Disordered regions lie at residues Met-1–Glu-25 and Asn-74–Gly-117.

May interact with the N-terminus of HD.

The polypeptide is Huntingtin-interacting protein M (Mus musculus (Mouse)).